The primary structure comprises 309 residues: Ribonuclease Z (309 aa).

Residues His63, His65, Asp67, His68, His145, Asp216, and His274 each coordinate Zn(2+). Asp67 serves as the catalytic Proton acceptor.

It belongs to the RNase Z family. In terms of assembly, homodimer. Zn(2+) serves as cofactor.

It catalyses the reaction Endonucleolytic cleavage of RNA, removing extra 3' nucleotides from tRNA precursor, generating 3' termini of tRNAs. A 3'-hydroxy group is left at the tRNA terminus and a 5'-phosphoryl group is left at the trailer molecule.. Its function is as follows. Zinc phosphodiesterase, which displays some tRNA 3'-processing endonuclease activity. Probably involved in tRNA maturation, by removing a 3'-trailer from precursor tRNA. The protein is Ribonuclease Z of Streptococcus equi subsp. zooepidemicus (strain H70).